A 165-amino-acid polypeptide reads, in one-letter code: Phosphopantetheine adenylyltransferase (165 aa).

Ser-10 lines the substrate pocket. ATP is bound by residues 10–11 (SF) and His-18. Positions 42, 79, and 93 each coordinate substrate. ATP is bound by residues 94-96 (GLR), Glu-104, and 129-135 (VRPITAT).

Belongs to the bacterial CoaD family. As to quaternary structure, homohexamer. Mg(2+) serves as cofactor.

The protein resides in the cytoplasm. The enzyme catalyses (R)-4'-phosphopantetheine + ATP + H(+) = 3'-dephospho-CoA + diphosphate. It functions in the pathway cofactor biosynthesis; coenzyme A biosynthesis; CoA from (R)-pantothenate: step 4/5. Its function is as follows. Reversibly transfers an adenylyl group from ATP to 4'-phosphopantetheine, yielding dephospho-CoA (dPCoA) and pyrophosphate. In Afipia carboxidovorans (strain ATCC 49405 / DSM 1227 / KCTC 32145 / OM5) (Oligotropha carboxidovorans), this protein is Phosphopantetheine adenylyltransferase.